The sequence spans 145 residues: Large ribosomal subunit protein uL15 (145 aa).

Residues 1–43 (MRLNTIKPGAGSKSAAKRVGRGIGSGLGKTCGRGHKGQKSRAG) are disordered. Positions 21 to 31 (RGIGSGLGKTC) are enriched in gly residues.

Belongs to the universal ribosomal protein uL15 family. Part of the 50S ribosomal subunit.

Its function is as follows. Binds to the 23S rRNA. This is Large ribosomal subunit protein uL15 from Aromatoleum aromaticum (strain DSM 19018 / LMG 30748 / EbN1) (Azoarcus sp. (strain EbN1)).